Consider the following 529-residue polypeptide: Bifunctional purine biosynthesis protein PurH (529 aa).

Residues 1–148 enclose the MGS-like domain; sequence MQQRRPVRRA…KNHKDVAIVV (148 aa). N6-acetyllysine is present on Lys287.

It belongs to the PurH family.

It carries out the reaction (6R)-10-formyltetrahydrofolate + 5-amino-1-(5-phospho-beta-D-ribosyl)imidazole-4-carboxamide = 5-formamido-1-(5-phospho-D-ribosyl)imidazole-4-carboxamide + (6S)-5,6,7,8-tetrahydrofolate. The catalysed reaction is IMP + H2O = 5-formamido-1-(5-phospho-D-ribosyl)imidazole-4-carboxamide. It functions in the pathway purine metabolism; IMP biosynthesis via de novo pathway; 5-formamido-1-(5-phospho-D-ribosyl)imidazole-4-carboxamide from 5-amino-1-(5-phospho-D-ribosyl)imidazole-4-carboxamide (10-formyl THF route): step 1/1. It participates in purine metabolism; IMP biosynthesis via de novo pathway; IMP from 5-formamido-1-(5-phospho-D-ribosyl)imidazole-4-carboxamide: step 1/1. This chain is Bifunctional purine biosynthesis protein PurH, found in Shigella dysenteriae serotype 1 (strain Sd197).